The chain runs to 350 residues: F(420)H(2) dehydrogenase subunit H (350 aa).

The next 8 membrane-spanning stretches (helical) occupy residues 21-41, 94-114, 128-148, 173-193, 200-220, 261-281, 288-308, and 330-350; these read GTVG…AVWI, VFML…AVFI, ISIL…FMAA, PLGI…IIDI, FVWN…ALMA, ILGS…PAFV, GLIA…MTII, and LLPL…YLGA.

The protein belongs to the complex I subunit 1 family. As to quaternary structure, the FPO complex is composed of at least 13 different subunits. FpoA, FpoH, FpoJ, FpoK, FpoL, FpoM and FpoN proteins constitute the membrane sector of the complex.

The protein resides in the cell membrane. The catalysed reaction is methanophenazine + reduced coenzyme F420-(gamma-L-Glu)(n) = dihydromethanophenazine + oxidized coenzyme F420-(gamma-L-Glu)(n) + H(+). Functionally, component of the F(420)H(2) dehydrogenase (FPO complex) which is part of the energy-conserving F(420)H(2):heterodisulfide oxidoreductase system. The membrane-bound electron transfer system of the complex plays an important role in the metabolism of methylotrophic methanogens when the organisms grow on methanol or methylamines. Catalyzes the oxidation of methanophenazine to dihydromethanophenazine. It shuttles electrons from F(420)H(2), via FAD and iron-sulfur (Fe-S) centers, to methanophenazine (an electron carrier in the membrane). It couples the redox reaction to proton translocation (for every two electrons transferred, two hydrogen ions are translocated across the cytoplasmic membrane), and thus conserves the redox energy in a proton gradient. It also catalyzes the oxidation of F(420)H(2) with quinones such as 2,3-dimethyl-1,4-naphthoquinone, 2-methyl-1,4-naphthoquinone and tetramethyl-p-benzoquinone. The chain is F(420)H(2) dehydrogenase subunit H from Methanosarcina mazei (strain ATCC BAA-159 / DSM 3647 / Goe1 / Go1 / JCM 11833 / OCM 88) (Methanosarcina frisia).